Reading from the N-terminus, the 178-residue chain is Putative magnesium-dependent phosphatase YER134C (178 aa).

The active-site Nucleophile is Asp-11. Asp-11 lines the Mg(2+) pocket. Phosphate-binding residues include Leu-12, Asp-13, Ser-74, and Arg-75. Position 13 (Asp-13) interacts with Mg(2+). The Proton donor role is filled by Asp-13. Arg-75 is a binding site for substrate. Asp-141 provides a ligand contact to Mg(2+).

It belongs to the HAD-like hydrolase superfamily.

The protein resides in the cytoplasm. The protein localises to the nucleus. The catalysed reaction is O-phospho-L-tyrosyl-[protein] + H2O = L-tyrosyl-[protein] + phosphate. Its function is as follows. Magnesium-dependent phosphatase which may act as a tyrosine phosphatase. This chain is Putative magnesium-dependent phosphatase YER134C, found in Saccharomyces cerevisiae (strain ATCC 204508 / S288c) (Baker's yeast).